Here is a 92-residue protein sequence, read N- to C-terminus: MSDHYHYPLDVSWSTEEITSVLHFLNQVELAYEAKVGAEELLKSYAAYKEIVRSKSQEKQIDREFQQASGYSTYQAVKKAREIEKGFFSLGR.

This sequence belongs to the UPF0223 family.

This Streptococcus equi subsp. zooepidemicus (strain H70) protein is UPF0223 protein SZO_10560.